A 272-amino-acid polypeptide reads, in one-letter code: Glutamate racemase (272 aa).

Substrate-binding positions include 13-14 (DS) and 45-46 (YG). The active-site Proton donor/acceptor is the Cys76. 77 to 78 (NT) is a substrate binding site. Cys187 functions as the Proton donor/acceptor in the catalytic mechanism. Residue 188-189 (TH) coordinates substrate.

It belongs to the aspartate/glutamate racemases family.

The catalysed reaction is L-glutamate = D-glutamate. It participates in cell wall biogenesis; peptidoglycan biosynthesis. Its function is as follows. Provides the (R)-glutamate required for cell wall biosynthesis. The polypeptide is Glutamate racemase (Roseiflexus sp. (strain RS-1)).